A 346-amino-acid polypeptide reads, in one-letter code: MSQFDSAAFIAGFPLKAHNTFGFDVRAQFACRIEREEQLMAAVRDPRAAGLPRLVLGGGSNVVLTGDFGGLVLLIALRGRRVAREDNDAWYVEAAGGEPWHEFVGWTLAQGLPGLENLALIPGTVGAAPIQNIGAYGLEMVERFASLRAVELATGDVVEMDAHACRFGYRDSFFKREGRDRFVITSVTFRLPKVWQPRAGYADLARELAAKGHADTPPTAQAIFDAVVAVRRAKLPDPLELGNAGSFFKNPVVEAAQFEALKTTEPEIVSYLQPDGRVKLAAGWLIDRCGWKGRAMGAAAVHERQALVLVNRGGASGTEVLALAKAIQRDVLERFGVELEAEPVCL.

Residues 23–194 enclose the FAD-binding PCMH-type domain; sequence FDVRAQFACR…TSVTFRLPKV (172 aa). Arg-170 is a catalytic residue. The Proton donor role is filled by Ser-246. Glu-342 is an active-site residue.

Belongs to the MurB family. The cofactor is FAD.

It localises to the cytoplasm. The catalysed reaction is UDP-N-acetyl-alpha-D-muramate + NADP(+) = UDP-N-acetyl-3-O-(1-carboxyvinyl)-alpha-D-glucosamine + NADPH + H(+). Its pathway is cell wall biogenesis; peptidoglycan biosynthesis. Its function is as follows. Cell wall formation. The chain is UDP-N-acetylenolpyruvoylglucosamine reductase from Paraburkholderia phytofirmans (strain DSM 17436 / LMG 22146 / PsJN) (Burkholderia phytofirmans).